The primary structure comprises 301 residues: Rhodopsin (301 aa).

At 1 to 18 (LHMIHLHWYQYPPMNPMM) the chain is on the extracellular side. Residues 19–43 (YPLLLVFMLITGILCLAGNFVTIWV) form a helical membrane-spanning segment. The Cytoplasmic segment spans residues 44–55 (FMNTKSLRTPAN). Residues 56–78 (LLVVNLAMSDFLMMFTMFPPMMI) form a helical membrane-spanning segment. Residues 79-92 (TCYYHTWTLGATFC) are Extracellular-facing. A disulfide bridge connects residues Cys92 and Cys169. A helical transmembrane segment spans residues 93–115 (EVYAFLGNLCGCASIWTMVFITF). The 'Ionic lock' involved in activated form stabilization motif lies at 116 to 118 (DRY). Over 116–134 (DRYNVIVKGVAGEPLSTKK) the chain is Cytoplasmic. A helical transmembrane segment spans residues 135 to 155 (ASLWILTVWVLSFTWCVAPFF). At 156–182 (GWNRYVPEGNLTGCGTDYLSEDILSRS) the chain is on the extracellular side. Asn165 carries N-linked (GlcNAc...) asparagine glycosylation. The chain crosses the membrane as a helical span at residues 183-204 (YLYIYSTWVYFLPLAITIYCYV). The Cytoplasmic portion of the chain corresponds to 205 to 245 (FIIKAVAAHEKGMRDQAKKMGIKSLRNEEAQKTSAECRLAK). Residues 246–267 (IAMTTVALWFIAWTPYLLINWV) form a helical membrane-spanning segment. Residues 268 to 278 (GMFARSYLSPV) lie on the Extracellular side of the membrane. The chain crosses the membrane as a helical span at residues 279-300 (YTIWGYVFAKANAVYNPIVYAI). Lys288 carries the post-translational modification N6-(retinylidene)lysine.

This sequence belongs to the G-protein coupled receptor 1 family. Opsin subfamily. Homodimer. Interacts with GNAQ. In terms of processing, contains one covalently linked retinal chromophore.

It localises to the cell projection. Its subcellular location is the rhabdomere membrane. Photoreceptor required for image-forming vision at low light intensity. Can use both retinal and 3-dehydroretinal as visual pigment. Light-induced isomerization of 11-cis to all-trans retinal triggers a conformational change that activates signaling via G-proteins. Signaling via GNAQ probably mediates the activation of phospholipase C. This is Rhodopsin (RHO) from Lacunicambarus ludovicianus (Painted devil crayfish).